The chain runs to 371 residues: Cytochrome b (371 aa).

The next 8 membrane-spanning stretches (helical) occupy residues 25 to 45 (FGSM…FLAV), 69 to 90 (WMMQ…YIHI), 105 to 125 (WLSG…GXXX), 170 to 190 (XXXX…XXXX), 218 to 238 (YKDL…VSFL), 280 to 300 (LGGA…PFTH), 312 to 332 (IMQL…WAAT), and 339 to 358 (FTMI…IMNP). Positions 75 and 89 each coordinate heme b. Residues Xaa-174 and Xaa-188 each coordinate heme b.

It belongs to the cytochrome b family. As to quaternary structure, the cytochrome bc1 complex contains 3 respiratory subunits (MT-CYB, CYC1 and UQCRFS1), 2 core proteins (UQCRC1 and UQCRC2) and probably 6 low-molecular weight proteins. The cofactor is heme b.

The protein localises to the mitochondrion inner membrane. Its function is as follows. Component of the ubiquinol-cytochrome c reductase complex (complex III or cytochrome b-c1 complex) that is part of the mitochondrial respiratory chain. The b-c1 complex mediates electron transfer from ubiquinol to cytochrome c. Contributes to the generation of a proton gradient across the mitochondrial membrane that is then used for ATP synthesis. This chain is Cytochrome b (MT-CYB), found in Eryx tataricus (Tartar sand boa).